A 153-amino-acid polypeptide reads, in one-letter code: Xanthine-guanine phosphoribosyltransferase (153 aa).

Residues 37 to 38 (RG), arginine 69, and 88 to 96 (DDLVDTGGT) each bind 5-phospho-alpha-D-ribose 1-diphosphate. Arginine 69 contacts GMP. Aspartate 89 lines the Mg(2+) pocket. 2 residues coordinate guanine: aspartate 92 and isoleucine 135. Xanthine is bound by residues aspartate 92 and isoleucine 135. GMP contacts are provided by residues 92–96 (DTGGT) and 134–135 (WI).

This sequence belongs to the purine/pyrimidine phosphoribosyltransferase family. XGPT subfamily. In terms of assembly, homotetramer. Mg(2+) serves as cofactor.

It localises to the cell inner membrane. It carries out the reaction GMP + diphosphate = guanine + 5-phospho-alpha-D-ribose 1-diphosphate. The catalysed reaction is XMP + diphosphate = xanthine + 5-phospho-alpha-D-ribose 1-diphosphate. It catalyses the reaction IMP + diphosphate = hypoxanthine + 5-phospho-alpha-D-ribose 1-diphosphate. The protein operates within purine metabolism; GMP biosynthesis via salvage pathway; GMP from guanine: step 1/1. Its pathway is purine metabolism; XMP biosynthesis via salvage pathway; XMP from xanthine: step 1/1. Functionally, purine salvage pathway enzyme that catalyzes the transfer of the ribosyl-5-phosphate group from 5-phospho-alpha-D-ribose 1-diphosphate (PRPP) to the N9 position of the 6-oxopurines guanine and xanthine to form the corresponding ribonucleotides GMP (guanosine 5'-monophosphate) and XMP (xanthosine 5'-monophosphate), with the release of PPi. To a lesser extent, also acts on hypoxanthine. This chain is Xanthine-guanine phosphoribosyltransferase, found in Proteus mirabilis (strain HI4320).